A 145-amino-acid chain; its full sequence is MGCGGSRADAIEPRYYESWTRETESTWLTYTDSDALPSAAATDSGPEAGGLHAGVLEDGLSSNGVLRPAAPGGIANPEKKMNCGTQCPNSQNLSSGPLTQKQNGLWATEAKRDAKRMSAREVAINVTENIRQMDRSKRVTKNCIN.

The N-myristoyl glycine moiety is linked to residue Gly-2. Residue Cys-3 is the site of S-palmitoyl cysteine attachment. The segment at 3-35 (CGGSRADAIEPRYYESWTRETESTWLTYTDSDA) is interaction with CAMK2A. Disordered stretches follow at residues 36-56 (LPSA…AGVL) and 87-109 (CPNS…WATE). Residues 87 to 105 (CPNSQNLSSGPLTQKQNGL) show a composition bias toward polar residues.

As to quaternary structure, interacts with CAMK2A. In terms of processing, palmitoylation and myristoylation target the protein to the lipid rafts. In terms of tissue distribution, at the mRNA level, predominantly expressed in the brain. At the protein level, mainly expressed in muscle tissues. In skeletal muscles, expressed in cranial and facial muscles, muscles of the neck, back, thoracic wall, and thigh. Also found in the contractile myoepithelial cell layer of salivary glands. In smooth muscles, expressed in the gastric wall, uterus, urinary bladder, as well as in the muscular lining around seminiferous tubules, prostatic ducts, epididymis, vas deferens, walls of small blood vessels in the dermis, and fascial layers between muscle fibers, brain, and around the spinal cord. Strongly expressed in myocardium. High expression levels are observed in placental spongiotrophoblast and adjacent myometrium. Also expressed in bone marrow hematopoietic cells. In the mature thymus, expressed in rare scattered cells. Weakly expressed in the brain neuropil, particularly near the hippocampus, and spinal cord white matter. Not detected in skin keratinocytes or lung (at protein level).

It localises to the cytoplasm. The protein localises to the synapse. It is found in the synaptosome. The protein resides in the membrane raft. Its subcellular location is the postsynaptic density. In terms of biological role, may play a synaptic role at the postsynaptic lipid rafts possibly through interaction with CAMK2A. The protein is Brain and acute leukemia cytoplasmic protein (Baalc) of Mus musculus (Mouse).